The sequence spans 123 residues: Basic phospholipase A2 Ph-TX1 (123 aa).

Ca(2+) is bound by residues Tyr-27, Gly-29, and Gly-31. 6 cysteine pairs are disulfide-bonded: Cys-28–Cys-45, Cys-44–Cys-96, Cys-50–Cys-123, Cys-51–Cys-89, Cys-59–Cys-83, and Cys-77–Cys-87. Residue His-48 is part of the active site. Ca(2+) is bound at residue Asp-49. The active site involves Asp-90.

It belongs to the phospholipase A2 family. Group II subfamily. D49 sub-subfamily. As to quaternary structure, monomer. Requires Ca(2+) as cofactor. As to expression, expressed by the venom gland.

It is found in the secreted. It carries out the reaction a 1,2-diacyl-sn-glycero-3-phosphocholine + H2O = a 1-acyl-sn-glycero-3-phosphocholine + a fatty acid + H(+). With respect to regulation, inhibited by divalent cations different from calcium ions (cadmium, magnesium, manganese, zinc), since they act as competitive antagonists of this cofactor. Functionally, snake venom phospholipase A2 (PLA2) that induces in vivo myotoxicity, moderates footpad edema, and causes in vitro neuromuscular blockade. PLA2 catalyzes the calcium-dependent hydrolysis of the 2-acyl groups in 3-sn-phosphoglycerides. The polypeptide is Basic phospholipase A2 Ph-TX1 (Bothrocophias hyoprora (Amazonian hognose viper)).